The sequence spans 377 residues: MAVNVNTNVAAMTAQRYLTGATNAQQTSMERLSSGFKINSAKDDAAGLQISNRLNVQSRGLDVAVRNANDGISIAQTAEGAMNETTNILQRMRDLSLQSANGSNSKSERVAIQEEITALNDELNRIAETTSFGGNKLLNGTFSTKSFQIGADNGEAVMLTLKDMRSDNRMMGGTSYVAAEGKDKDWKVQAGANDITFTLKDIDGNDQTITVNAKEGDDIEEVATYINGQTDMVKASVNEKGQLQIFAGNNKVTGDVAFSGGLAGALNMQAGTAETVDTIDVTSVGGAQQSVAVIDSALKYVDSHRAELGAFQNRFNHAISNLDNINENVNASKSRIKDTDFAKETTALTKSQILSQASSSVLAQAKQAPNAALSLLG.

2 coiled-coil regions span residues S103 to T129 and A310 to T339.

Belongs to the bacterial flagellin family. Heteromer of multiple flagellin subunits including FlaA, FlaB, FlaC, FlaD and FlaE.

It localises to the secreted. Its subcellular location is the bacterial flagellum. Its function is as follows. Flagellin is the subunit protein which polymerizes to form the filaments of bacterial flagella. FlaD is not essential for flagellar synthesis and motility. The chain is Flagellin D (flaD) from Vibrio cholerae serotype O1 (strain ATCC 39315 / El Tor Inaba N16961).